The following is a 97-amino-acid chain: U-scoloptoxin(10)-Ssd2a (97 aa).

The signal sequence occupies residues 1-23; that stretch reads MNKSMLIFFTILFLTYIIEEKEA.

Post-translationally, contains 3 disulfide bonds. Expressed by the venom gland.

It localises to the secreted. The sequence is that of U-scoloptoxin(10)-Ssd2a from Scolopendra dehaani (Thai centipede).